The following is a 430-amino-acid chain: Aspartate aminotransferase, mitochondrial (430 aa).

The transit peptide at 1 to 29 (MALLHSSRILSGMAAAFHPGLAAAASARA) directs the protein to the mitochondrion. A Phosphothreonine modification is found at Thr48. The residue at position 59 (Lys59) is an N6-acetyllysine. Substrate is bound at residue Gly65. Lys73 carries the post-translational modification N6-acetyllysine; alternate. Lys73 is modified (N6-succinyllysine; alternate). Position 82 is an N6-acetyllysine (Lys82). An N6-acetyllysine; alternate modification is found at Lys90. N6-succinyllysine; alternate is present on Lys90. Position 96 is a 3'-nitrotyrosine; alternate (Tyr96). Tyr96 bears the Phosphotyrosine; alternate mark. Lys107 and Lys122 each carry N6-acetyllysine; alternate. Residues Lys107 and Lys122 each carry the N6-succinyllysine; alternate modification. At Ser143 the chain carries Phosphoserine. Position 159 is an N6-acetyllysine; alternate (Lys159). Position 159 is an N6-succinyllysine; alternate (Lys159). Trp162 is a substrate binding site. Residue Lys185 is modified to N6-acetyllysine; alternate. Lys185 carries the N6-succinyllysine; alternate modification. Residue Asn215 participates in substrate binding. Lys227 is subject to N6-succinyllysine. Lys234 carries the post-translational modification N6-acetyllysine. N6-acetyllysine; alternate occurs at positions 279 and 296. Lys279 carries the post-translational modification N6-(pyridoxal phosphate)lysine; alternate. N6-succinyllysine; alternate is present on Lys296. Lys302 carries the post-translational modification N6-acetyllysine. Lys309 is modified (N6-acetyllysine; alternate). An N6-succinyllysine; alternate modification is found at Lys309. Asymmetric dimethylarginine is present on Arg313. At Lys338 the chain carries N6-acetyllysine; alternate. Position 338 is an N6-succinyllysine; alternate (Lys338). Lys345 is modified (N6-acetyllysine). Position 363 is an N6-acetyllysine; alternate (Lys363). N6-succinyllysine; alternate is present on Lys363. N6-acetyllysine occurs at positions 364 and 387. 2 positions are modified to N6-acetyllysine; alternate: Lys396 and Lys404. 2 positions are modified to N6-succinyllysine; alternate: Lys396 and Lys404. Substrate is bound at residue Arg407.

The protein belongs to the class-I pyridoxal-phosphate-dependent aminotransferase family. Homodimer. The cofactor is pyridoxal 5'-phosphate. In terms of processing, acetylation of Lys-296, Lys-345 and Lys-363 is observed in liver mitochondria from fasted mice but not from fed mice. Detected in brain (at protein level).

The protein resides in the mitochondrion matrix. It is found in the cell membrane. The enzyme catalyses L-aspartate + 2-oxoglutarate = oxaloacetate + L-glutamate. It carries out the reaction L-kynurenine + 2-oxoglutarate = kynurenate + L-glutamate + H2O. Its function is as follows. Catalyzes the irreversible transamination of the L-tryptophan metabolite L-kynurenine to form kynurenic acid (KA). As a member of the malate-aspartate shuttle, it has a key role in the intracellular NAD(H) redox balance. Is important for metabolite exchange between mitochondria and cytosol, and for amino acid metabolism. Facilitates cellular uptake of long-chain free fatty acids. This Mus musculus (Mouse) protein is Aspartate aminotransferase, mitochondrial (Got2).